Here is a 256-residue protein sequence, read N- to C-terminus: Phosphonates import ATP-binding protein PhnC (256 aa).

The 245-residue stretch at 2–246 (LKVIQLDKTY…VLQHIYRQPD (245 aa)) folds into the ABC transporter domain. 35 to 42 (GPSGAGKT) provides a ligand contact to ATP.

Belongs to the ABC transporter superfamily. Phosphonates importer (TC 3.A.1.9.1) family. In terms of assembly, the complex is composed of two ATP-binding proteins (PhnC), two transmembrane proteins (PhnE) and a solute-binding protein (PhnD).

Its subcellular location is the cell membrane. It catalyses the reaction phosphonate(out) + ATP + H2O = phosphonate(in) + ADP + phosphate + H(+). Its function is as follows. Part of the ABC transporter complex PhnCDE involved in phosphonates import. Responsible for energy coupling to the transport system. The polypeptide is Phosphonates import ATP-binding protein PhnC (Lactiplantibacillus plantarum (strain ATCC BAA-793 / NCIMB 8826 / WCFS1) (Lactobacillus plantarum)).